The chain runs to 210 residues: Leucyl/phenylalanyl-tRNA--protein transferase (210 aa).

The protein belongs to the L/F-transferase family.

It is found in the cytoplasm. It carries out the reaction N-terminal L-lysyl-[protein] + L-leucyl-tRNA(Leu) = N-terminal L-leucyl-L-lysyl-[protein] + tRNA(Leu) + H(+). The catalysed reaction is N-terminal L-arginyl-[protein] + L-leucyl-tRNA(Leu) = N-terminal L-leucyl-L-arginyl-[protein] + tRNA(Leu) + H(+). The enzyme catalyses L-phenylalanyl-tRNA(Phe) + an N-terminal L-alpha-aminoacyl-[protein] = an N-terminal L-phenylalanyl-L-alpha-aminoacyl-[protein] + tRNA(Phe). Functionally, functions in the N-end rule pathway of protein degradation where it conjugates Leu, Phe and, less efficiently, Met from aminoacyl-tRNAs to the N-termini of proteins containing an N-terminal arginine or lysine. The polypeptide is Leucyl/phenylalanyl-tRNA--protein transferase (Roseobacter denitrificans (strain ATCC 33942 / OCh 114) (Erythrobacter sp. (strain OCh 114))).